The sequence spans 669 residues: uncharacterized protein (669 aa).

A run of 6 helical transmembrane segments spans residues 39–61, 124–146, 153–175, 190–212, 221–243, and 263–285; these read LCPLLVALAILFSLTAVSSGTSW, ISLWGISLGPTAGTLLVGVLISI, GIIYGIPSIVSTIFLLMFMYALG, GLAFIVIGLIVWSLNWLICFFGV, FAPGIISGSYTITAIIGVAQTAL, and IAAGYAISYVLSNIGIILLIRYL. RCK C-terminal domains follow at residues 316–397 and 398–483; these read AGSL…KLIG and KESD…LGGR. The next 5 helical transmembrane spans lie at 484–506, 516–538, 558–580, 585–607, and 645–667; these read PILNSSITEVMYMAIAMGIGYIF, IPFALGTSAGCLLAGIFMSYWRS, IGLNLFVAVLAAAVGPKIIESFH, IWVAIIGILGALVPPLVAFVVGI, and VPYPLTYALTTVLALVGGYFAML.

This sequence belongs to the AAE transporter (TC 2.A.81) family.

It is found in the cell membrane. This is an uncharacterized protein from Desulfotalea psychrophila (strain LSv54 / DSM 12343).